Here is a 346-residue protein sequence, read N- to C-terminus: UPF0425 pyridoxal phosphate-dependent protein MK0620 (346 aa).

At Lys-206 the chain carries N6-(pyridoxal phosphate)lysine.

Requires pyridoxal 5'-phosphate as cofactor.

The chain is UPF0425 pyridoxal phosphate-dependent protein MK0620 from Methanopyrus kandleri (strain AV19 / DSM 6324 / JCM 9639 / NBRC 100938).